A 320-amino-acid chain; its full sequence is Thymidylate synthase (320 aa).

Residues R27 and 182–183 (RR) contribute to the dUMP site. C202 acts as the Nucleophile in catalysis. Residues 222-225 (RSAD), N233, and 263-265 (HIY) each bind dUMP. Residue D225 participates in (6R)-5,10-methylene-5,6,7,8-tetrahydrofolate binding. Residue A319 coordinates (6R)-5,10-methylene-5,6,7,8-tetrahydrofolate.

It belongs to the thymidylate synthase family. Bacterial-type ThyA subfamily. Homodimer.

The protein localises to the cytoplasm. The enzyme catalyses dUMP + (6R)-5,10-methylene-5,6,7,8-tetrahydrofolate = 7,8-dihydrofolate + dTMP. The protein operates within pyrimidine metabolism; dTTP biosynthesis. Its function is as follows. Catalyzes the reductive methylation of 2'-deoxyuridine-5'-monophosphate (dUMP) to 2'-deoxythymidine-5'-monophosphate (dTMP) while utilizing 5,10-methylenetetrahydrofolate (mTHF) as the methyl donor and reductant in the reaction, yielding dihydrofolate (DHF) as a by-product. This enzymatic reaction provides an intracellular de novo source of dTMP, an essential precursor for DNA biosynthesis. The polypeptide is Thymidylate synthase (Limosilactobacillus reuteri (strain DSM 20016) (Lactobacillus reuteri)).